Here is a 120-residue protein sequence, read N- to C-terminus: Large ribosomal subunit protein uL18 (120 aa).

This sequence belongs to the universal ribosomal protein uL18 family. Part of the 50S ribosomal subunit; part of the 5S rRNA/L5/L18/L25 subcomplex. Contacts the 5S and 23S rRNAs.

In terms of biological role, this is one of the proteins that bind and probably mediate the attachment of the 5S RNA into the large ribosomal subunit, where it forms part of the central protuberance. This is Large ribosomal subunit protein uL18 from Nitrobacter hamburgensis (strain DSM 10229 / NCIMB 13809 / X14).